The sequence spans 688 residues: G protein-coupled receptor kinase 3 (688 aa).

The N-terminal stretch occupies residues 1–190 (MADLEAVLAD…ELNIHLSMND (190 aa)). The RGS domain maps to 54 to 175 (TFDKIFNQKI…MESDKFTRFC (122 aa)). The 263-residue stretch at 191 to 453 (FSVHRIIGRG…ARELKEHIFF (263 aa)) folds into the Protein kinase domain. ATP is bound by residues 197-205 (IGRGGFGEV) and lysine 220. The Proton acceptor role is filled by aspartate 317. The 68-residue stretch at 454-521 (KGIDWQHVYL…VISERWQQEV (68 aa)) folds into the AGC-kinase C-terminal domain. The region spanning 558 to 652 (DCIMHGYMLK…WLKELTCTFN (95 aa)) is the PH domain.

Belongs to the protein kinase superfamily. AGC Ser/Thr protein kinase family. GPRK subfamily. Interacts with GIT1. Ubiquitinated.

The protein localises to the postsynapse. It is found in the presynapse. The enzyme catalyses [beta-adrenergic receptor] + ATP = [beta-adrenergic receptor]-phosphate + ADP + H(+). Its function is as follows. Specifically phosphorylates the agonist-occupied form of the beta-adrenergic and closely related receptors. The chain is G protein-coupled receptor kinase 3 from Mus musculus (Mouse).